Consider the following 514-residue polypeptide: 2-isopropylmalate synthase (514 aa).

Positions 5-268 (LIIFDTTLRD…DVGIDTTQIV (264 aa)) constitute a Pyruvate carboxyltransferase domain. Residues D14, H202, H204, and N239 each coordinate Mn(2+). Residues 395-514 (KFVSLSQRSE…KDDKLNPQRA (120 aa)) are regulatory domain.

This sequence belongs to the alpha-IPM synthase/homocitrate synthase family. LeuA type 1 subfamily. In terms of assembly, homodimer. Mn(2+) is required as a cofactor.

The protein localises to the cytoplasm. The enzyme catalyses 3-methyl-2-oxobutanoate + acetyl-CoA + H2O = (2S)-2-isopropylmalate + CoA + H(+). The protein operates within amino-acid biosynthesis; L-leucine biosynthesis; L-leucine from 3-methyl-2-oxobutanoate: step 1/4. Catalyzes the condensation of the acetyl group of acetyl-CoA with 3-methyl-2-oxobutanoate (2-ketoisovalerate) to form 3-carboxy-3-hydroxy-4-methylpentanoate (2-isopropylmalate). The polypeptide is 2-isopropylmalate synthase (Burkholderia cenocepacia (strain HI2424)).